The chain runs to 233 residues: LexA repressor (233 aa).

Positions 26–46 (FEEMKEALDLKSKSGVHRLIS) form a DNA-binding region, H-T-H motif. Active-site for autocatalytic cleavage activity residues include Ser-153 and Lys-191.

This sequence belongs to the peptidase S24 family. In terms of assembly, homodimer.

The catalysed reaction is Hydrolysis of Ala-|-Gly bond in repressor LexA.. In terms of biological role, represses a number of genes involved in the response to DNA damage (SOS response), including recA and lexA. In the presence of single-stranded DNA, RecA interacts with LexA causing an autocatalytic cleavage which disrupts the DNA-binding part of LexA, leading to derepression of the SOS regulon and eventually DNA repair. The protein is LexA repressor of Erythrobacter litoralis (strain HTCC2594).